Here is a 608-residue protein sequence, read N- to C-terminus: Glutamyl-tRNA(Gln) amidotransferase subunit E (608 aa).

This sequence belongs to the GatB/GatE family. GatE subfamily. In terms of assembly, heterodimer of GatD and GatE.

The enzyme catalyses L-glutamyl-tRNA(Gln) + L-glutamine + ATP + H2O = L-glutaminyl-tRNA(Gln) + L-glutamate + ADP + phosphate + H(+). In terms of biological role, allows the formation of correctly charged Gln-tRNA(Gln) through the transamidation of misacylated Glu-tRNA(Gln) in organisms which lack glutaminyl-tRNA synthetase. The reaction takes place in the presence of glutamine and ATP through an activated gamma-phospho-Glu-tRNA(Gln). The GatDE system is specific for glutamate and does not act on aspartate. The polypeptide is Glutamyl-tRNA(Gln) amidotransferase subunit E (Pyrobaculum aerophilum (strain ATCC 51768 / DSM 7523 / JCM 9630 / CIP 104966 / NBRC 100827 / IM2)).